A 260-amino-acid polypeptide reads, in one-letter code: MKVLRKGDRGDEVCQLQTLLNLCGYDVGKPDGIFGNNTFNQVVKFQKDNCLDSDGIVGKNTWAELFSKYSPPIPYKTIPMPTANKSRAAATPVMNAVENATGVRSQLLLTFASIESAFDYEIKAKTSSATGWFQFLTGTWKTMIENYGMKYGVLTDPTGALRKDPRISALMGAELIKENMNILRPVLKREPTDTDLYLAHFFGPGAARRFLTTGQNELAATHFPKEAQANPSIFYNKDGSPKTIQEVYNLMDGKVAAHRK.

Positions 9–69 (RGDEVCQLQT…NTWAELFSKY (61 aa)) are peptidoglycan binding. Residues 106–210 (QLLLTFASIE…FFGPGAARRF (105 aa)) form a peptidoglycan hydrolase activity region. The active site involves glutamate 115.

Belongs to the glycosyl hydrolase 23 family.

The enzyme catalyses Exolytic cleavage of the (1-&gt;4)-beta-glycosidic linkage between N-acetylmuramic acid (MurNAc) and N-acetylglucosamine (GlcNAc) residues in peptidoglycan, from either the reducing or the non-reducing ends of the peptidoglycan chains, with concomitant formation of a 1,6-anhydrobond in the MurNAc residue.. Functionally, endolysin with transglycosylase activity that degrades host peptidoglycans and participates in the sequential events which lead to the programmed host cell lysis releasing the mature viral particles. Binds and cleaves peptidoglycans found in Gram-negative bacteria and that contain the A1 chemotype peptidoglycan and fully N-acetylated glucosamine. In Pseudomonas phage phiKZ, this protein is Endolysin gp144 (PHIKZ144).